The following is a 763-amino-acid chain: Xaa-Pro dipeptidyl-peptidase (763 aa).

Active-site charge relay system residues include serine 348, aspartate 468, and histidine 498.

It belongs to the peptidase S15 family. As to quaternary structure, homodimer.

The protein resides in the cytoplasm. The enzyme catalyses Hydrolyzes Xaa-Pro-|- bonds to release unblocked, N-terminal dipeptides from substrates including Ala-Pro-|-p-nitroanilide and (sequentially) Tyr-Pro-|-Phe-Pro-|-Gly-Pro-|-Ile.. Its function is as follows. Removes N-terminal dipeptides sequentially from polypeptides having unsubstituted N-termini provided that the penultimate residue is proline. The protein is Xaa-Pro dipeptidyl-peptidase (pepX) of Lactococcus lactis subsp. cremoris (Streptococcus cremoris).